The following is a 115-amino-acid chain: U3-lycotoxin-Ls1s (115 aa).

Positions 1–20 (MKFVLLFGVFLLTLFSYSSS) are cleaved as a signal peptide. A propeptide spanning residues 21-44 (EMLDDFDQADEDELLSLIEKEEAR) is cleaved from the precursor. Intrachain disulfides connect Cys48/Cys63, Cys55/Cys72, Cys62/Cys87, and Cys74/Cys85.

It belongs to the neurotoxin 19 (CSTX) family. 01 subfamily. Expressed by the venom gland.

Its subcellular location is the secreted. The chain is U3-lycotoxin-Ls1s from Lycosa singoriensis (Wolf spider).